The primary structure comprises 513 residues: Putative thymidine phosphorylase (513 aa).

The protein belongs to the thymidine/pyrimidine-nucleoside phosphorylase family. Type 2 subfamily.

It catalyses the reaction thymidine + phosphate = 2-deoxy-alpha-D-ribose 1-phosphate + thymine. The polypeptide is Putative thymidine phosphorylase (Rhodopseudomonas palustris (strain BisB18)).